Here is a 356-residue protein sequence, read N- to C-terminus: MNKGLCNWRLFSLFGMMALLLAGCGKPFLSTLQPAGEVADMQYSLMLLSTSIMVLVIVVVAIIFVYVVIRFRRRKGEENKIPKQVEGSHKLEIIWTVIPIILLLILAVPTVLTTFKLADVKAMNDKKRDKNTVVVNVRANQYWWEFEYPDYGIITSQDLVVPTNEKVYFNLIASDVKHSFWIPAVGGKMDTNTDNKNQFWLVFDQKATDKAGGVFYGKCAELCGPSHALMDFKVRPLPRDQFDAWVKKMQNAKKPVVTDPVAKEGEAIFNKSCIGCHAVTPLDKRPAQRRTAPNLADFGDRERIAGILEHNEENLKKWLRDPNSVKPGNKMAGTYGHLTEEQIDALTKYLMSLKVE.

Residues 1–23 form the signal peptide; the sequence is MNKGLCNWRLFSLFGMMALLLAG. A cytochrome c oxidase subunit II region spans residues 24–259; that stretch reads CGKPFLSTLQ…QNAKKPVVTD (236 aa). A run of 2 helical transmembrane segments spans residues 45–65 and 93–113; these read LMLL…IIFV and IIWT…TVLT. Cu cation contacts are provided by His-178, Cys-219, Cys-223, and His-227. Positions 260–356 constitute a Cytochrome c domain; that stretch reads PVAKEGEAIF…TKYLMSLKVE (97 aa). Residues Cys-273, Cys-276, His-277, and Met-331 each coordinate heme c.

Belongs to the cytochrome c oxidase subunit 2 family. Cu cation serves as cofactor. Heme c is required as a cofactor.

It is found in the cell membrane. The catalysed reaction is 4 Fe(II)-[cytochrome c] + O2 + 8 H(+)(in) = 4 Fe(III)-[cytochrome c] + 2 H2O + 4 H(+)(out). In terms of biological role, subunits I and II form the functional core of the enzyme complex. Electrons originating in cytochrome c are transferred via heme a and Cu(A) to the binuclear center formed by heme a3 and Cu(B). In Bacillus sp. (strain PS3), this protein is Cytochrome c oxidase subunit 2 (ctaC).